Here is a 521-residue protein sequence, read N- to C-terminus: Glucose-6-phosphate isomerase (521 aa).

Residue E327 is the Proton donor of the active site. Catalysis depends on residues H358 and K486.

The protein belongs to the GPI family.

It localises to the cytoplasm. The enzyme catalyses alpha-D-glucose 6-phosphate = beta-D-fructose 6-phosphate. The protein operates within carbohydrate biosynthesis; gluconeogenesis. Its pathway is carbohydrate degradation; glycolysis; D-glyceraldehyde 3-phosphate and glycerone phosphate from D-glucose: step 2/4. Functionally, catalyzes the reversible isomerization of glucose-6-phosphate to fructose-6-phosphate. This is Glucose-6-phosphate isomerase from Bordetella petrii (strain ATCC BAA-461 / DSM 12804 / CCUG 43448).